We begin with the raw amino-acid sequence, 149 residues long: General odorant-binding protein 57c (149 aa).

The first 16 residues, 1-16, serve as a signal peptide directing secretion; that stretch reads MLKLWLICILTVSVVS. Cystine bridges form between Cys-32-Cys-70, Cys-66-Cys-117, and Cys-106-Cys-126.

Belongs to the PBP/GOBP family.

Its function is as follows. Present in the aqueous fluid surrounding olfactory sensory dendrites and are thought to aid in the capture and transport of hydrophobic odorants into and through this fluid. The protein is General odorant-binding protein 57c of Drosophila melanogaster (Fruit fly).